Reading from the N-terminus, the 158-residue chain is 2-C-methyl-D-erythritol 2,4-cyclodiphosphate synthase (158 aa).

A divalent metal cation contacts are provided by Asp8 and His10. 4-CDP-2-C-methyl-D-erythritol 2-phosphate contacts are provided by residues 8-10 (DAH) and 34-35 (HS). His42 lines the a divalent metal cation pocket. 4-CDP-2-C-methyl-D-erythritol 2-phosphate is bound by residues 56-58 (DIG), 132-135 (TTTE), and Arg142.

It belongs to the IspF family. In terms of assembly, homotrimer. Requires a divalent metal cation as cofactor.

It carries out the reaction 4-CDP-2-C-methyl-D-erythritol 2-phosphate = 2-C-methyl-D-erythritol 2,4-cyclic diphosphate + CMP. It functions in the pathway isoprenoid biosynthesis; isopentenyl diphosphate biosynthesis via DXP pathway; isopentenyl diphosphate from 1-deoxy-D-xylulose 5-phosphate: step 4/6. Its function is as follows. Involved in the biosynthesis of isopentenyl diphosphate (IPP) and dimethylallyl diphosphate (DMAPP), two major building blocks of isoprenoid compounds. Catalyzes the conversion of 4-diphosphocytidyl-2-C-methyl-D-erythritol 2-phosphate (CDP-ME2P) to 2-C-methyl-D-erythritol 2,4-cyclodiphosphate (ME-CPP) with a corresponding release of cytidine 5-monophosphate (CMP). The sequence is that of 2-C-methyl-D-erythritol 2,4-cyclodiphosphate synthase from Nitrosococcus oceani (strain ATCC 19707 / BCRC 17464 / JCM 30415 / NCIMB 11848 / C-107).